Here is a 184-residue protein sequence, read N- to C-terminus: Large ribosomal subunit protein uL15 (184 aa).

The tract at residues 1–45 (MDLSSLRPAKGAVKNKKRVGRGQGSGNGTTAGKGNNGQQSRSGYK) is disordered. The segment covering 21-35 (RGQGSGNGTTAGKGN) has biased composition (gly residues).

This sequence belongs to the universal ribosomal protein uL15 family. As to quaternary structure, part of the 50S ribosomal subunit.

Binds to the 23S rRNA. The polypeptide is Large ribosomal subunit protein uL15 (Pelodictyon phaeoclathratiforme (strain DSM 5477 / BU-1)).